The sequence spans 287 residues: Elongation factor Ts (287 aa).

The interval 80-83 is involved in Mg(2+) ion dislocation from EF-Tu; the sequence is TDFL.

It belongs to the EF-Ts family.

Its subcellular location is the cytoplasm. In terms of biological role, associates with the EF-Tu.GDP complex and induces the exchange of GDP to GTP. It remains bound to the aminoacyl-tRNA.EF-Tu.GTP complex up to the GTP hydrolysis stage on the ribosome. The sequence is that of Elongation factor Ts from Pseudomonas putida (strain GB-1).